Reading from the N-terminus, the 179-residue chain is Adenine phosphoribosyltransferase (179 aa).

It belongs to the purine/pyrimidine phosphoribosyltransferase family. As to quaternary structure, homodimer.

It localises to the cytoplasm. It catalyses the reaction AMP + diphosphate = 5-phospho-alpha-D-ribose 1-diphosphate + adenine. It functions in the pathway purine metabolism; AMP biosynthesis via salvage pathway; AMP from adenine: step 1/1. Its function is as follows. Catalyzes a salvage reaction resulting in the formation of AMP, that is energically less costly than de novo synthesis. The sequence is that of Adenine phosphoribosyltransferase from Jannaschia sp. (strain CCS1).